The chain runs to 624 residues: Pentatricopeptide repeat-containing protein At2g32630 (624 aa).

13 PPR repeats span residues 153 to 187 (FEKF…GLSI), 188 to 222 (DERS…GVKI), 223 to 257 (TVYS…GIKP), 258 to 292 (EAYT…GVVY), 293 to 327 (NKVT…GIES), 328 to 362 (DVHV…GLSP), 363 to 397 (SSYT…GVNI), 398 to 432 (TQVV…GFQA), 433 to 467 (DVFT…GVKL), 468 to 502 (STVS…GVQP), 503 to 537 (NAIT…GMDP), 538 to 572 (DSYT…GLDQ), and 573 to 607 (NSVT…GYTI).

It belongs to the PPR family. P subfamily.

This chain is Pentatricopeptide repeat-containing protein At2g32630, found in Arabidopsis thaliana (Mouse-ear cress).